The following is a 659-amino-acid chain: UDP-glucuronate:xylan alpha-glucuronosyltransferase 1 (659 aa).

A compositionally biased stretch (low complexity) spans 1 to 14 (MANSPAAPAPTTTT). Positions 1–20 (MANSPAAPAPTTTTGGDSRR) are disordered. The helical; Signal-anchor for type II membrane protein transmembrane segment at 70 to 90 (FQIVKLLLFILLSATLFTIIY) threads the bilayer. Residues D416 and D418 each coordinate Mn(2+). Substrate contacts are provided by residues 416-418 (DAD), 445-447 (NSG), 472-476 (NGGDQ), and 526-531 (HYLGMK). Mn(2+) is bound at residue H526.

The protein belongs to the glycosyltransferase 8 family. Glycogenin subfamily. It depends on Mn(2+) as a cofactor.

It is found in the golgi apparatus membrane. Functionally, glycosyltransferase required for the addition of both glucuronic acid and 4-O-methylglucuronic acid branches to xylan in stem cell walls. In association with GUX2, is responsible for almost all of the substitutions of the xylan backbone in stem glucuronoxylan. In Arabidopsis thaliana (Mouse-ear cress), this protein is UDP-glucuronate:xylan alpha-glucuronosyltransferase 1 (GUX1).